The primary structure comprises 215 residues: MSGLRTVSASSGNGKSYDSIMKILLIGDSGVGKSCLLVRFVEDKFNPSFITTIGIDFKIKTVDINGKKVKLQLWDTAGQERFRTITTAYYRGAMGIILVYDVTDERTFTNIKQWFKTVNEHANDEAQLLLVGNKSDMETRVVTADQGEALAKELGIPFIESSAKNDDNVNEIFFTLAKLIQEKIDSNKLVGVGNGKEGNISINSGSGNSSKSNCC.

A GTP-binding site is contributed by 27–34 (GDSGVGKS). An Effector region motif is present at residues 49–57 (FITTIGIDF). Residues 75–79 (DTAGQ) and 133–136 (NKSD) each bind GTP. 2 positions are modified to phosphoserine: S201 and S204. S-geranylgeranyl cysteine attachment occurs at residues C214 and C215.

It belongs to the small GTPase superfamily. Rab family. As to quaternary structure, interacts with the guanyl-nucleotide exchange factor SEC2. Interacts with SRO7, YIF1, YIP3, YIP4 and YIP5.

Its subcellular location is the cytoplasmic vesicle. The protein localises to the secretory vesicle membrane. It is found in the cell membrane. The protein resides in the cytoplasm. In terms of biological role, involved in exocytosis. Maybe by regulating the binding and fusion of secretory vesicles with the cell surface. The GTP-bound form of SEC4 may interact with an effector, thereby stimulating its activity and leading to exocytotic fusion. SEC4 may be an upstream activator of the 19.5S SEC8/SEC15 particle. SEC4 probably interacts directly with SEC8; it could serve as the attachment site for the SEC8/SEC15 particle. The protein is Ras-related protein SEC4 (SEC4) of Saccharomyces cerevisiae (strain ATCC 204508 / S288c) (Baker's yeast).